The sequence spans 98 residues: uncharacterized protein (98 aa).

Helical transmembrane passes span 14 to 34 (FLVILCMVAFLAGCTQSPVTA) and 41 to 61 (MTGAQPVLIWLLISSIIASII).

It is found in the cell membrane. This is an uncharacterized protein from Haemophilus influenzae (strain ATCC 51907 / DSM 11121 / KW20 / Rd).